An 804-amino-acid polypeptide reads, in one-letter code: Phenylalanine--tRNA ligase beta subunit (804 aa).

One can recognise a tRNA-binding domain in the interval 40–155; the sequence is GEGIKGVVIG…NDAETGSDAL (116 aa). The B5 domain maps to 409–484; the sequence is IEANNIHVSA…RLYGYDNIPS (76 aa). Asp-462, Asp-468, Glu-471, and Glu-472 together coordinate Mg(2+). Residues 710-803 form the FDX-ACB domain; the sequence is PKYPSVTRDI…LEDTYQAVLR (94 aa).

It belongs to the phenylalanyl-tRNA synthetase beta subunit family. Type 1 subfamily. As to quaternary structure, tetramer of two alpha and two beta subunits. Mg(2+) is required as a cofactor.

It is found in the cytoplasm. The enzyme catalyses tRNA(Phe) + L-phenylalanine + ATP = L-phenylalanyl-tRNA(Phe) + AMP + diphosphate + H(+). In Bacillus subtilis (strain 168), this protein is Phenylalanine--tRNA ligase beta subunit (pheT).